The sequence spans 128 residues: L-ectoine synthase (128 aa).

It belongs to the ectoine synthase family.

It catalyses the reaction (2S)-4-acetamido-2-aminobutanoate = L-ectoine + H2O. Its pathway is amine and polyamine biosynthesis; ectoine biosynthesis; L-ectoine from L-aspartate 4-semialdehyde: step 3/3. Its function is as follows. Catalyzes the circularization of gamma-N-acetyl-alpha,gamma-diaminobutyric acid (ADABA) to ectoine (1,4,5,6-tetrahydro-2-methyl-4-pyrimidine carboxylic acid), which is an excellent osmoprotectant. The sequence is that of L-ectoine synthase from Vibrio atlanticus (strain LGP32) (Vibrio splendidus (strain Mel32)).